Reading from the N-terminus, the 227-residue chain is 6,7-dimethyl-8-ribityllumazine synthase, chloroplastic (227 aa).

The transit peptide at 1-71 directs the protein to the chloroplast; the sequence is MKSLASPPCL…LRSSFVQTAA (71 aa). Residues Phe-94, 128–130, and 152–154 contribute to the 5-amino-6-(D-ribitylamino)uracil site; these read SFE and AVI. 157 to 158 contributes to the (2S)-2-hydroxy-3-oxobutyl phosphate binding site; the sequence is DT. His-160 serves as the catalytic Proton donor. Phe-185 is a 5-amino-6-(D-ribitylamino)uracil binding site. Residue Arg-199 coordinates (2S)-2-hydroxy-3-oxobutyl phosphate.

Belongs to the DMRL synthase family. In terms of assembly, oligomer forming an icosahedral capsid.

It localises to the plastid. Its subcellular location is the chloroplast. The enzyme catalyses (2S)-2-hydroxy-3-oxobutyl phosphate + 5-amino-6-(D-ribitylamino)uracil = 6,7-dimethyl-8-(1-D-ribityl)lumazine + phosphate + 2 H2O + H(+). It participates in cofactor biosynthesis; riboflavin biosynthesis; riboflavin from 2-hydroxy-3-oxobutyl phosphate and 5-amino-6-(D-ribitylamino)uracil: step 1/2. Catalyzes the formation of 6,7-dimethyl-8-ribityllumazine by condensation of 5-amino-6-(D-ribitylamino)uracil with 3,4-dihydroxy-2-butanone 4-phosphate. This is the penultimate step in the biosynthesis of riboflavin. The polypeptide is 6,7-dimethyl-8-ribityllumazine synthase, chloroplastic (Arabidopsis thaliana (Mouse-ear cress)).